Reading from the N-terminus, the 782-residue chain is E3 ubiquitin-protein ligase SopA (782 aa).

The disordered stretch occupies residues 137 to 171 (VSVSANNRPTVSEGRTPPVSPSLSLQATSSPSSPA). The span at 157–171 (PSLSLQATSSPSSPA) shows a compositional bias: low complexity. Cys-753 acts as the Glycyl thioester intermediate in catalysis.

This sequence belongs to the SopA E3 ligase family. Ubiquitinated in the presence of host E1 ubiquitin-activating enzyme, E2 ubiquitin-conjugating enzyme and ubiquitin.

Its subcellular location is the secreted. The protein resides in the host cell. The enzyme catalyses S-ubiquitinyl-[E2 ubiquitin-conjugating enzyme]-L-cysteine + [acceptor protein]-L-lysine = [E2 ubiquitin-conjugating enzyme]-L-cysteine + N(6)-ubiquitinyl-[acceptor protein]-L-lysine.. Its function is as follows. Effector proteins function to alter host cell physiology and promote bacterial survival in host tissues. This protein is an E3 ubiquitin ligase that interferes with host's ubiquitination pathway. The protein is E3 ubiquitin-protein ligase SopA (sopA) of Salmonella newport (strain SL254).